The sequence spans 435 residues: uncharacterized protein (435 aa).

An F-box domain is found at 7 to 58; sequence PFPITKLPLVPRCKILKFFDYGDLLDISLCSKRMAQTVRDIHITADLHYLTL.

This is an uncharacterized protein from Caenorhabditis elegans.